Here is a 277-residue protein sequence, read N- to C-terminus: 3-methyl-2-oxobutanoate hydroxymethyltransferase (277 aa).

Mg(2+) contacts are provided by aspartate 58 and aspartate 97. 3-methyl-2-oxobutanoate is bound by residues 58–59, aspartate 97, and lysine 127; that span reads DS. Mg(2+) is bound at residue glutamate 129. Glutamate 195 acts as the Proton acceptor in catalysis.

Belongs to the PanB family. Homodecamer; pentamer of dimers. Mg(2+) serves as cofactor.

It is found in the cytoplasm. It carries out the reaction 3-methyl-2-oxobutanoate + (6R)-5,10-methylene-5,6,7,8-tetrahydrofolate + H2O = 2-dehydropantoate + (6S)-5,6,7,8-tetrahydrofolate. Its pathway is cofactor biosynthesis; (R)-pantothenate biosynthesis; (R)-pantoate from 3-methyl-2-oxobutanoate: step 1/2. Catalyzes the reversible reaction in which hydroxymethyl group from 5,10-methylenetetrahydrofolate is transferred onto alpha-ketoisovalerate to form ketopantoate. This is 3-methyl-2-oxobutanoate hydroxymethyltransferase from Leifsonia xyli subsp. xyli (strain CTCB07).